A 241-amino-acid polypeptide reads, in one-letter code: DNA-binding dual master transcriptional regulator RpaA (241 aa).

A Response regulatory domain is found at 3-119; the sequence is RILIIDDDPA…EMLARVRALL (117 aa). At D52 the chain carries 4-aspartylphosphate. The segment at residues 132-231 is a DNA-binding region (ompR/PhoB-type); the sequence is SEILNQGPLT…VYGAGYCLEL (100 aa).

As to quaternary structure, interacts with reduced ferredoxin (petF). Interacts with CikA, RpaB, SasA, Sll0038 (pixG) and a number of other proteins. In terms of processing, phosphorylated by SasA; phosphorylation is maximal when KaiC phosphorylation is active during the circadian cycle. Dephosphorylated by CikA. CikA and SasA cooperation generates RpaA activity oscillation that is distinct from that generated by CikA or SasA alone and offset from the rhythm of KaiC phosphorylation.

It is found in the cytoplasm. In terms of biological role, response regulator of 2 two-component regulatory systems SasA/RpaA and CikA/RpaA involved in genome-wide circadian gene expression. The histidine kinases have opposing effects modulated by the clock oscillator proteins; SasA phosphorylates RpaA (stimulated by fully phosphorylated KaiC1) while CikA dephosphorylates phospho-RpaA (stimulated by the phospho-Ser-432-KaiC1-KaiB complex). Its function is as follows. The RpaA regulon is about 300 genes, and includes itself, cikA, sigE, sigG, genes involved in photosynthesis, carbon metabolism in the light and dark, phototaxis, CRISPR arrays 2 and 3 as well as nearly 90 ncRNAs. Genes are up- or down-regulated in its absence. Involved in regulation of primary sugar and amino acid metabolism and in adaptation to light changes. Regulates the accumulation of the monomeric photosystem I and the D1 protein under high light conditions. Overexpression causes cells to grow more slowly, increases levels of transcripts for clock oscillator genes in the light and the dark, increases levels of SigE protein, increases accumulation of sugar catabolic enzymes in the dark with concomitant decreases in most sugar metabolites. Plays a role in cell division; overexpression from the psbAII promoter increases expression of some cell-division-related genes, alters cell volume and changes the outer cell membrane and cell wall appearance. The chain is DNA-binding dual master transcriptional regulator RpaA from Synechocystis sp. (strain ATCC 27184 / PCC 6803 / Kazusa).